Consider the following 222-residue polypeptide: 7-cyano-7-deazaguanine synthase (222 aa).

ATP is bound at residue 8–18 (LSGGMDSTTLA). Zn(2+) contacts are provided by C188, C196, C199, and C202.

The protein belongs to the QueC family. Zn(2+) is required as a cofactor.

It catalyses the reaction 7-carboxy-7-deazaguanine + NH4(+) + ATP = 7-cyano-7-deazaguanine + ADP + phosphate + H2O + H(+). It functions in the pathway purine metabolism; 7-cyano-7-deazaguanine biosynthesis. Functionally, catalyzes the ATP-dependent conversion of 7-carboxy-7-deazaguanine (CDG) to 7-cyano-7-deazaguanine (preQ(0)). This Methanoculleus marisnigri (strain ATCC 35101 / DSM 1498 / JR1) protein is 7-cyano-7-deazaguanine synthase.